The sequence spans 302 residues: Pyridoxal 5'-phosphate synthase subunit PdxS (302 aa).

D32 is a D-ribose 5-phosphate binding site. The Schiff-base intermediate with D-ribose 5-phosphate role is filled by K89. Residue G161 coordinates D-ribose 5-phosphate. R173 is a binding site for D-glyceraldehyde 3-phosphate. D-ribose 5-phosphate is bound by residues G222 and 243 to 244 (GS). The segment at 276 to 302 (ASNPGKGMKGEANADLSEGEKLQTRGV) is disordered. The span at 293 to 302 (EGEKLQTRGV) shows a compositional bias: basic and acidic residues.

Belongs to the PdxS/SNZ family. In terms of assembly, in the presence of PdxT, forms a dodecamer of heterodimers.

The catalysed reaction is aldehydo-D-ribose 5-phosphate + D-glyceraldehyde 3-phosphate + L-glutamine = pyridoxal 5'-phosphate + L-glutamate + phosphate + 3 H2O + H(+). It functions in the pathway cofactor biosynthesis; pyridoxal 5'-phosphate biosynthesis. Functionally, catalyzes the formation of pyridoxal 5'-phosphate from ribose 5-phosphate (RBP), glyceraldehyde 3-phosphate (G3P) and ammonia. The ammonia is provided by the PdxT subunit. Can also use ribulose 5-phosphate and dihydroxyacetone phosphate as substrates, resulting from enzyme-catalyzed isomerization of RBP and G3P, respectively. In Haloquadratum walsbyi (strain DSM 16790 / HBSQ001), this protein is Pyridoxal 5'-phosphate synthase subunit PdxS.